Reading from the N-terminus, the 142-residue chain is Hemoglobin subunit alpha (142 aa).

Residue S1 is modified to N-acetylserine. The Globin domain maps to 1–142 (SLSDKDKNTV…LALALSERYR (142 aa)). H59 contributes to the O2 binding site. Heme b is bound at residue H88.

It belongs to the globin family. Heterotetramer of two alpha chains and two beta chains. Can form polymers. In terms of tissue distribution, red blood cells.

In terms of biological role, involved in oxygen transport from gills to the various peripheral tissues. This Chelidonichthys kumu (Bluefin gurnard) protein is Hemoglobin subunit alpha (hba).